The following is a 279-amino-acid chain: tRNA (guanine-N(1)-)-methyltransferase (279 aa).

S-adenosyl-L-methionine-binding positions include Gly117 and 141–146; that span reads LGDYVL. The disordered stretch occupies residues 256 to 279; the sequence is WTPDGSGFRAGGDPVADSSDTNEP.

It belongs to the RNA methyltransferase TrmD family. Homodimer.

It is found in the cytoplasm. The catalysed reaction is guanosine(37) in tRNA + S-adenosyl-L-methionine = N(1)-methylguanosine(37) in tRNA + S-adenosyl-L-homocysteine + H(+). Its function is as follows. Specifically methylates guanosine-37 in various tRNAs. This chain is tRNA (guanine-N(1)-)-methyltransferase, found in Kineococcus radiotolerans (strain ATCC BAA-149 / DSM 14245 / SRS30216).